Here is a 192-residue protein sequence, read N- to C-terminus: Orotate phosphoribosyltransferase (192 aa).

Residue 116–124 (EDIVTTGLS) coordinates 5-phospho-alpha-D-ribose 1-diphosphate. 2 residues coordinate orotate: threonine 120 and arginine 148.

This sequence belongs to the purine/pyrimidine phosphoribosyltransferase family. PyrE subfamily. In terms of assembly, homodimer. The cofactor is Mg(2+).

The catalysed reaction is orotidine 5'-phosphate + diphosphate = orotate + 5-phospho-alpha-D-ribose 1-diphosphate. It participates in pyrimidine metabolism; UMP biosynthesis via de novo pathway; UMP from orotate: step 1/2. Its function is as follows. Catalyzes the transfer of a ribosyl phosphate group from 5-phosphoribose 1-diphosphate to orotate, leading to the formation of orotidine monophosphate (OMP). This is Orotate phosphoribosyltransferase from Bartonella quintana (strain Toulouse) (Rochalimaea quintana).